The following is a 354-amino-acid chain: UDP-2,3-diacetamido-2,3-dideoxy-D-glucuronate 2-epimerase (354 aa).

The protein belongs to the UDP-N-acetylglucosamine 2-epimerase family.

It catalyses the reaction UDP-2,3-diacetamido-2,3-dideoxy-alpha-D-glucuronate = UDP-2,3-diacetamido-2,3-dideoxy-alpha-D-mannuronate. It participates in bacterial outer membrane biogenesis; LPS O-antigen biosynthesis. Functionally, plays a role in the biosynthesis of B-band O antigen for serotype O5. Catalyzes the epimerization of UDP-2,3-diacetamido-2,3-dideoxy-alpha-D-glucuronic acid (UDP-alpha-D-GlcNAc3NAcA) to UDP-2,3-diacetamido-2,3-dideoxy-alpha-D-mannuronic acid (UDP-alpha-D-ManNAc3NAcA). Exhibits high specificity towards the substrate as UDP-alpha-D-GlcNAc, UDP-alpha-D-GlcNAcA (UDP-2-acetamido-2-deoxy-alpha-D-glucuronic acid) and UDP-alpha-D-GlcNAc3NAc (UDP-2,3-diacetamido-2,3-dideoxy-alpha-D-glucose) cannot act as substrates. The protein is UDP-2,3-diacetamido-2,3-dideoxy-D-glucuronate 2-epimerase of Pseudomonas aeruginosa (strain ATCC 15692 / DSM 22644 / CIP 104116 / JCM 14847 / LMG 12228 / 1C / PRS 101 / PAO1).